A 192-amino-acid chain; its full sequence is UPF0312 protein PFLU_5725 (192 aa).

The first 23 residues, methionine 1 to alanine 23, serve as a signal peptide directing secretion.

The protein belongs to the UPF0312 family. Type 1 subfamily.

It localises to the periplasm. This is UPF0312 protein PFLU_5725 from Pseudomonas fluorescens (strain SBW25).